Consider the following 710-residue polypeptide: Probable thimet oligopeptidase (710 aa).

Zn(2+) is bound at residue H502. E503 is an active-site residue. H506 lines the Zn(2+) pocket.

Belongs to the peptidase M3 family. Requires Zn(2+) as cofactor.

It localises to the cytoplasm. It carries out the reaction Preferential cleavage of bonds with hydrophobic residues at P1, P2 and P3' and a small residue at P1' in substrates of 5 to 15 residues.. Its function is as follows. Involved in cytoplasmic peptide degradation. This is Probable thimet oligopeptidase from Arabidopsis thaliana (Mouse-ear cress).